Here is an 82-residue protein sequence, read N- to C-terminus: MLVLTRKLKEVIQIGDDIEITVLAIQGDQVKLGINAPKHVEIHRKEIYLAIQAENNAASLASKTSLEQLNEQLKHWKGGKQA.

The protein belongs to the CsrA/RsmA family. In terms of assembly, homodimer; the beta-strands of each monomer intercalate to form a hydrophobic core, while the alpha-helices form wings that extend away from the core.

It is found in the cytoplasm. Its function is as follows. A translational regulator that binds mRNA to regulate translation initiation and/or mRNA stability. Usually binds in the 5'-UTR at or near the Shine-Dalgarno sequence preventing ribosome-binding, thus repressing translation. Its main target seems to be the major flagellin gene, while its function is anatagonized by FliW. The chain is Translational regulator CsrA from Geobacillus sp. (strain WCH70).